The chain runs to 208 residues: Uracil phosphoribosyltransferase (208 aa).

5-phospho-alpha-D-ribose 1-diphosphate contacts are provided by residues R78, R103, and 130 to 138 (DPMLATGGS). Residues I193 and 198–200 (GDA) each bind uracil. A 5-phospho-alpha-D-ribose 1-diphosphate-binding site is contributed by D199.

Belongs to the UPRTase family. Mg(2+) serves as cofactor.

The catalysed reaction is UMP + diphosphate = 5-phospho-alpha-D-ribose 1-diphosphate + uracil. Its pathway is pyrimidine metabolism; UMP biosynthesis via salvage pathway; UMP from uracil: step 1/1. Allosterically activated by GTP. In terms of biological role, catalyzes the conversion of uracil and 5-phospho-alpha-D-ribose 1-diphosphate (PRPP) to UMP and diphosphate. The protein is Uracil phosphoribosyltransferase of Klebsiella pneumoniae subsp. pneumoniae (strain ATCC 700721 / MGH 78578).